We begin with the raw amino-acid sequence, 111 residues long: Large ribosomal subunit protein uL23 (111 aa).

This sequence belongs to the universal ribosomal protein uL23 family. Part of the 50S ribosomal subunit. Contacts protein L29, and trigger factor when it is bound to the ribosome.

In terms of biological role, one of the early assembly proteins it binds 23S rRNA. One of the proteins that surrounds the polypeptide exit tunnel on the outside of the ribosome. Forms the main docking site for trigger factor binding to the ribosome. This is Large ribosomal subunit protein uL23 from Chlamydia muridarum (strain MoPn / Nigg).